A 346-amino-acid chain; its full sequence is Partitioning defective 6 homolog alpha (346 aa).

The segment at 1-116 is interaction with PRKCI and PRKCZ; it reads MARPQRTPAR…SNSLQRRKKG (116 aa). A PB1 domain is found at 15 to 95; it reads IVEVKSKFDA…PPLRLLVQKR (81 aa). The interaction with PARD3 and CDC42 stretch occupies residues 126 to 253; sequence RTRPPLLISL…VTVKPANQRN (128 aa). The Pseudo-CRIB domain maps to 133-150; sequence ISLPQDFRQVSSVIDVDL. The PDZ domain maps to 157–250; sequence RVRLHKHGSD…NLIVTVKPAN (94 aa). Disordered regions lie at residues 257–294 and 317–346; these read RGAS…HPPC and GSSL…GFSL. Position 278 is a phosphoserine (Ser278). Over residues 317–332 the composition is skewed to polar residues; the sequence is GSSLPSLDSREQANSG. Ser345 carries the phosphoserine modification.

Belongs to the PAR6 family. Interacts with PALS1 and CRB3. Interacts with PARD3. Interacts with GTP-bound forms of CDC42, RHOQ/TC10 and RAC1. Interacts with the N-terminal part of PRKCI and PRKCZ. Part of a complex with PARD3, CDC42 or RAC1 and PRKCI or PRKCZ. Part of a complex with LLGL1 and PRKCI. Interacts with MAP2K5. Interacts with TGFBR1; involved in TGF-beta induced epithelial to mesenchymal transition. Interacts with ECT2 ('Thr-359' phosphorylated form) and PRKCI. Interacts with DCTN1 and PCM1. Post-translationally, phosphorylated by the TGF-beta receptor. Ubiquitinated by the SCF(FBXO31) complex, leading to its proteasomal degradation.

The protein resides in the cytoplasm. The protein localises to the cell membrane. Its subcellular location is the cell junction. It is found in the tight junction. It localises to the cytoskeleton. The protein resides in the microtubule organizing center. The protein localises to the centrosome. Its subcellular location is the centriolar satellite. Functionally, adapter protein involved in asymmetrical cell division and cell polarization processes. Probably involved in the formation of epithelial tight junctions. Association with PARD3 may prevent the interaction of PARD3 with F11R/JAM1, thereby preventing tight junction assembly. The PARD6-PARD3 complex links GTP-bound Rho small GTPases to atypical protein kinase C proteins. Regulates centrosome organization and function. Essential for the centrosomal recruitment of key proteins that control centrosomal microtubule organization. The polypeptide is Partitioning defective 6 homolog alpha (Pard6a) (Rattus norvegicus (Rat)).